Here is an 852-residue protein sequence, read N- to C-terminus: DNA polymerase kappa (852 aa).

The UmuC domain occupies 102–357; it reads IVHVDMDAFY…LPIRKVSGIG (256 aa). Aspartate 106 and aspartate 197 together coordinate Mg(2+). The tract at residues 252–273 is disordered; sequence FEDSPPDLQPQGSPFQLNSEEQ. Positions 261–273 are enriched in polar residues; that stretch reads PQGSPFQLNSEEQ. 2 consecutive UBZ4-type zinc fingers follow at residues 619 to 649 and 761 to 791; these read TFIC…DGPS and ALVC…NKGI. Positions 622, 625, 640, 644, 764, 767, 782, and 786 each coordinate Zn(2+). Positions 798–852 are disordered; the sequence is SEGNSVKQPKESSRSTDRLQKASGRTKRPGTKTKSSTLKKTKPRDPRHTLDGFFK. Positions 805–817 are enriched in basic and acidic residues; that stretch reads QPKESSRSTDRLQ. Positions 821-839 are enriched in basic residues; the sequence is GRTKRPGTKTKSSTLKKTK. Residues 840–852 show a composition bias toward basic and acidic residues; it reads PRDPRHTLDGFFK.

The protein belongs to the DNA polymerase type-Y family. As to quaternary structure, interacts with PCNA. Interacts with REV1. It depends on Mg(2+) as a cofactor. The cofactor is Mn(2+). In terms of tissue distribution, detected at low levels in heart, brain, lung, liver, kidney and testis.

It localises to the nucleus. It carries out the reaction DNA(n) + a 2'-deoxyribonucleoside 5'-triphosphate = DNA(n+1) + diphosphate. DNA polymerase specifically involved in DNA repair. Plays an important role in translesion synthesis, where the normal high-fidelity DNA polymerases cannot proceed and DNA synthesis stalls. Depending on the context, it inserts the correct base, but causes frequent base transitions, transversions and frameshifts. Lacks 3'-5' proofreading exonuclease activity. Forms a Schiff base with 5'-deoxyribose phosphate at abasic sites, but does not have lyase activity. The polypeptide is DNA polymerase kappa (Polk) (Mus musculus (Mouse)).